We begin with the raw amino-acid sequence, 876 residues long: MSNERYNARESEPKWQAKWDEAKIFATRNDDLRKKYYVLEMFPYPSGRIHMGHVRNYTMGDVVARTMRARGYNVLHPMGWDAFGLPAENAAIERKVAPKAWTYDNIAAMKKQLQTMGLSLDWAREFATCDPSYYKHQQKMFLDFLKVGLVEREKRKLNWDPVDMTVLANEQVIDGRGWRSGAVVELREMNQWVFKITKYAQELLDALDTLDRWPDKVRLMQRNWIGRSEGLMVRFALDSATTPAGETELKIFTTRPDTLFGAKFMAIAADHPLAQAAAAKAPKVAAFIDDCKKRGTAQAEIDTAEKQGIDTGIRAVHPFDPSWKLPVYVANFVLMEYGTGAIFGCPAHDQRDLDFVNKYQLGNTPVVCPEGQDPASFVITDTAYDGEGRMINSRFLDGKTIAEAKEEVAKRLETEQLAGAPVGARKVNFRLRDWGISRQRYWGCPIPIIHCPTCDVVPVPDADLPVVLPEDVSFDKPGNALDHHPTWKHVTCPKCGGKAVRETDTMDTFVDSSWYFARFTDPWNTEAPTTPDVVNRMMPVDQYIGGVEHAILHLLYSRFFTRAMKAAGHIDIQHDEPFAGLFTQGMVVHETYRKADGHFASPAEISITVEGDTRRATLLDGGSPVEIGPIEKMSKSKRNTVDPDDIIGTYGADTARWFMLSDSPPDRDVIWSEEGVKGASRFVQRLWRMVNDAAPIAASAPAERPASFGADALTLRKAAHGALDKVLSGIERLAFNVSLAHIREFSNTLGDALARSQTPSPDLAWAIRESTVILVQLFHPMMPHLAEECWTVLGQTGLVSEALWPPIEQDLLVEDSITLPVQVNGKKRGDVTVPRDAPTSEIEAAVLALDTVKQALGGKPVRKVIVVPQRIVNVVG.

The 'HIGH' region motif lies at P43 to H53. The 'KMSKS' region motif lies at K632 to S636. K635 lines the ATP pocket.

Belongs to the class-I aminoacyl-tRNA synthetase family.

It localises to the cytoplasm. It catalyses the reaction tRNA(Leu) + L-leucine + ATP = L-leucyl-tRNA(Leu) + AMP + diphosphate. In Rhodopseudomonas palustris (strain ATCC BAA-98 / CGA009), this protein is Leucine--tRNA ligase.